We begin with the raw amino-acid sequence, 300 residues long: uncharacterized protein (300 aa).

This is an uncharacterized protein from Bradyrhizobium diazoefficiens (strain JCM 10833 / BCRC 13528 / IAM 13628 / NBRC 14792 / USDA 110).